We begin with the raw amino-acid sequence, 458 residues long: Serine/threonine-protein kinase tricornered (458 aa).

The region spanning 92–389 (FEALKVIGRG…LEDLKSVPFF (298 aa)) is the Protein kinase domain. ATP-binding positions include 98 to 106 (IGRGAFGEV) and K121. The interaction with mats and Mob1 stretch occupies residues 118-179 (YAMKVLRKAD…EFLPGGDMMT (62 aa)). D215 functions as the Proton acceptor in the catalytic mechanism. The residue at position 287 (S287) is a Phosphoserine. Residues 390–458 (RGVDWEHIRE…YKRFEVRNLE (69 aa)) form the AGC-kinase C-terminal domain. T448 carries the post-translational modification Phosphothreonine.

This sequence belongs to the protein kinase superfamily. AGC Ser/Thr protein kinase family. As to quaternary structure, interacts with, and is activated by, Mob1. Mg(2+) is required as a cofactor.

The protein resides in the cytoplasm. It is found in the nucleus. The enzyme catalyses L-seryl-[protein] + ATP = O-phospho-L-seryl-[protein] + ADP + H(+). It carries out the reaction L-threonyl-[protein] + ATP = O-phospho-L-threonyl-[protein] + ADP + H(+). Its function is as follows. Serine/threonine-protein kinase involved in controlling cell structure and proliferation of a variety of polarized outgrowths including epidermal hairs, bristles, arista laterals, and dendrites. Together with fry, maintains the integrity of epidermal hairs and is an essential component of the signaling pathway regulating dendritic branching of sensory neurons. Reduces neurite outgrowth by phosphorylating pav/pavarotti, thereby inhibiting its function in microtubule-microtubule sliding. The protein is Serine/threonine-protein kinase tricornered of Drosophila pseudoobscura pseudoobscura (Fruit fly).